Reading from the N-terminus, the 368-residue chain is Alanine racemase (368 aa).

Catalysis depends on lysine 35, which acts as the Proton acceptor; specific for D-alanine. Residue lysine 35 is modified to N6-(pyridoxal phosphate)lysine. Arginine 130 contacts substrate. Tyrosine 253 acts as the Proton acceptor; specific for L-alanine in catalysis. Methionine 305 contacts substrate.

The protein belongs to the alanine racemase family. The cofactor is pyridoxal 5'-phosphate.

The catalysed reaction is L-alanine = D-alanine. It participates in amino-acid biosynthesis; D-alanine biosynthesis; D-alanine from L-alanine: step 1/1. Its function is as follows. Catalyzes the interconversion of L-alanine and D-alanine. May also act on other amino acids. In Cupriavidus metallidurans (strain ATCC 43123 / DSM 2839 / NBRC 102507 / CH34) (Ralstonia metallidurans), this protein is Alanine racemase (alr).